A 197-amino-acid chain; its full sequence is 3-isopropylmalate dehydratase small subunit (197 aa).

This sequence belongs to the LeuD family. LeuD type 1 subfamily. In terms of assembly, heterodimer of LeuC and LeuD.

The catalysed reaction is (2R,3S)-3-isopropylmalate = (2S)-2-isopropylmalate. It functions in the pathway amino-acid biosynthesis; L-leucine biosynthesis; L-leucine from 3-methyl-2-oxobutanoate: step 2/4. Functionally, catalyzes the isomerization between 2-isopropylmalate and 3-isopropylmalate, via the formation of 2-isopropylmaleate. The polypeptide is 3-isopropylmalate dehydratase small subunit (Mycobacterium sp. (strain KMS)).